The chain runs to 476 residues: MVKLIHTLADHGDDVNCCAFSFSLLATCSLDKTIRLYSLRDFTELPHSPLKFHTYAVHCCCFSPSGHILASCSTDGTTVLWNTENGQMLAVMEQPSGSPVRVCQFSPDSTCLASGAADGTVVLWNAQSYKLYRCGSVKDGSLAACAFSPNGSFFVTGSSCGDLTVWDDKMRCLHSEKAHDLGITCCDFSSQPVSDGEQGLQFFRLASCGQDCQVKIWIVSFTHILGFELKYKSTLSGHCAPVLACAFSHDGQMLVSGSVDKSVIVYDTNTENILHTLTQHTRYVTTCAFAPNTLLLATGSMDKTVNIWQFDLETLCQARRTEHQLKQFTEDWSEEDVSTWLCAQDLKDLVGIFKMNNIDGKELLNLTKESLADDLKIESLGLRSKVLRKIEELRTKVKSLSSGIPDEFICPITRELMKDPVIASDGYSYEKEAMENWISKKKRTSPMTNLVLPSAVLTPNRTLKMAINRWLETHQK.

WD repeat units lie at residues 10–47 (DHGDDVNCCAFSFSLLATCSLDKTIRLYSLRDFTELPH), 52–91 (FHTYAVHCCCFSPSGHILASCSTDGTTVLWNTENGQMLAV), 95–134 (PSGSPVRVCQFSPDSTCLASGAADGTVVLWNAQSYKLYRC), 137–176 (VKDGSLAACAFSPNGSFFVTGSSCGDLTVWDDKMRCLHSE), 178–228 (AHDL…LGFE), 237–276 (GHCAPVLACAFSHDGQMLVSGSVDKSVIVYDTNTENILHT), and 279–318 (QHTRYVTTCAFAPNTLLLATGSMDKTVNIWQFDLETLCQA). The SAM domain occupies 332–396 (WSEEDVSTWL…LRKIEELRTK (65 aa)). Residues 403-476 (GIPDEFICPI…INRWLETHQK (74 aa)) form the U-box domain. At Thr458 the chain carries Phosphothreonine.

This is WD repeat, SAM and U-box domain-containing protein 1 (WDSUB1) from Homo sapiens (Human).